The following is a 296-amino-acid chain: GTPase Era (296 aa).

One can recognise an Era-type G domain in the interval 7 to 173 (KAGFVSIIGR…VDLVREHLPE (167 aa)). A G1 region spans residues 15-22 (GRPNVGKS). Residue 15 to 22 (GRPNVGKS) coordinates GTP. A G2 region spans residues 41–45 (QTTRN). The G3 stretch occupies residues 62-65 (DTPG). Residues 62-66 (DTPGI) and 122-125 (NKID) each bind GTP. Positions 122-125 (NKID) are G4. The segment at 152 to 154 (ISA) is G5. The KH type-2 domain maps to 204 to 281 (TNREVPYGTA…YLELFVQVQE (78 aa)).

This sequence belongs to the TRAFAC class TrmE-Era-EngA-EngB-Septin-like GTPase superfamily. Era GTPase family. As to quaternary structure, monomer.

The protein resides in the cytoplasm. It localises to the cell inner membrane. Its function is as follows. An essential GTPase that binds both GDP and GTP, with rapid nucleotide exchange. Plays a role in 16S rRNA processing and 30S ribosomal subunit biogenesis and possibly also in cell cycle regulation and energy metabolism. The protein is GTPase Era of Trichlorobacter lovleyi (strain ATCC BAA-1151 / DSM 17278 / SZ) (Geobacter lovleyi).